An 89-amino-acid polypeptide reads, in one-letter code: Small ribosomal subunit protein uS15 (89 aa).

It belongs to the universal ribosomal protein uS15 family. In terms of assembly, part of the 30S ribosomal subunit. Forms a bridge to the 50S subunit in the 70S ribosome, contacting the 23S rRNA.

Functionally, one of the primary rRNA binding proteins, it binds directly to 16S rRNA where it helps nucleate assembly of the platform of the 30S subunit by binding and bridging several RNA helices of the 16S rRNA. Forms an intersubunit bridge (bridge B4) with the 23S rRNA of the 50S subunit in the ribosome. The chain is Small ribosomal subunit protein uS15 from Proteus mirabilis (strain HI4320).